The sequence spans 319 residues: ATP-dependent 6-phosphofructokinase (319 aa).

Position 11 (G11) interacts with ATP. R21–R25 serves as a coordination point for ADP. Residues R72–C73 and G102–S105 contribute to the ATP site. Residue D103 participates in Mg(2+) binding. Residue T125–D127 coordinates substrate. D127 functions as the Proton acceptor in the catalytic mechanism. R154 serves as a coordination point for ADP. Substrate is bound by residues R162 and M169–R171. Residues G185 to E187, K211, and K213 to H215 contribute to the ADP site. Substrate-binding positions include E222, R243, and H249–R252.

Belongs to the phosphofructokinase type A (PFKA) family. ATP-dependent PFK group I subfamily. Prokaryotic clade 'B1' sub-subfamily. In terms of assembly, homotetramer. Mg(2+) serves as cofactor.

The protein localises to the cytoplasm. The catalysed reaction is beta-D-fructose 6-phosphate + ATP = beta-D-fructose 1,6-bisphosphate + ADP + H(+). Its pathway is carbohydrate degradation; glycolysis; D-glyceraldehyde 3-phosphate and glycerone phosphate from D-glucose: step 3/4. Allosterically activated by ADP and other diphosphonucleosides, and allosterically inhibited by phosphoenolpyruvate. Catalyzes the phosphorylation of D-fructose 6-phosphate to fructose 1,6-bisphosphate by ATP, the first committing step of glycolysis. This Clostridium botulinum (strain 657 / Type Ba4) protein is ATP-dependent 6-phosphofructokinase.